The primary structure comprises 739 residues: Adenosylcobalamin-dependent ribonucleoside-triphosphate reductase (739 aa).

Cys119 and Cys419 form a disulfide bridge. The interval 147 to 158 is effector region-1; it reads SMPFSFLFDELM. The segment at 168 to 313 is effector region-2; it reads ARSNISQIPR…ICNLIGKAVV (146 aa). Active-site residues include Cys408 and Glu410. The adenosylcobalamin-binding-1 stretch occupies residues 565–626; the sequence is FHYGAYLIQR…NPNFASAGTV (62 aa). The adenosylcobalamin-binding-2 stretch occupies residues 685-724; sequence LQQAPKEPIDKETYEKRSQEITGNVEEVFSQLNSDVKDLE.

Belongs to the class II ribonucleoside-triphosphate reductase family. In terms of assembly, monomer. Adenosylcob(III)alamin is required as a cofactor.

The enzyme catalyses a 2'-deoxyribonucleoside 5'-triphosphate + [thioredoxin]-disulfide + H2O = a ribonucleoside 5'-triphosphate + [thioredoxin]-dithiol. Allosterically regulated by ATP and dNTP. This chain is Adenosylcobalamin-dependent ribonucleoside-triphosphate reductase (rtpR), found in Lactobacillus delbrueckii subsp. bulgaricus (strain ATCC 11842 / DSM 20081 / BCRC 10696 / JCM 1002 / NBRC 13953 / NCIMB 11778 / NCTC 12712 / WDCM 00102 / Lb 14).